The chain runs to 236 residues: UPF0257 lipoprotein YnfC (236 aa).

The signal sequence occupies residues 1-16 (MKKPLLLTLLCMILAG). The N-palmitoyl cysteine moiety is linked to residue Cys-17. The S-diacylglycerol cysteine moiety is linked to residue Cys-17.

It belongs to the UPF0257 family.

The protein resides in the cell membrane. This Salmonella typhi protein is UPF0257 lipoprotein YnfC.